We begin with the raw amino-acid sequence, 529 residues long: Glycerol kinase 5 (529 aa).

Residues S28 and S29 each contribute to the ATP site. Positions 98, 275, and 276 each coordinate glycerol. ATP is bound by residues T297, G340, and G440.

This sequence belongs to the FGGY kinase family.

The protein localises to the cytoplasm. The enzyme catalyses glycerol + ATP = sn-glycerol 3-phosphate + ADP + H(+). The protein operates within polyol metabolism; glycerol degradation via glycerol kinase pathway; sn-glycerol 3-phosphate from glycerol: step 1/1. In terms of biological role, skin-specific kinase that plays a key role in glycerol metabolism, catalyzing its phosphorylation to produce sn-glycerol 3-phosphate. Involved in skin-specific regulation of sterol regulatory element-binding protein (SREBP) processing and lipid biosynthesis. This Homo sapiens (Human) protein is Glycerol kinase 5.